A 460-amino-acid chain; its full sequence is Exodeoxyribonuclease 7 large subunit (460 aa).

Residues 438–460 (ARVEKVNREEEKQSGSQKNGTRD) form a disordered region. Positions 439 to 450 (RVEKVNREEEKQ) are enriched in basic and acidic residues. Positions 451–460 (SGSQKNGTRD) are enriched in polar residues.

The protein belongs to the XseA family. Heterooligomer composed of large and small subunits.

The protein localises to the cytoplasm. The enzyme catalyses Exonucleolytic cleavage in either 5'- to 3'- or 3'- to 5'-direction to yield nucleoside 5'-phosphates.. Its function is as follows. Bidirectionally degrades single-stranded DNA into large acid-insoluble oligonucleotides, which are then degraded further into small acid-soluble oligonucleotides. This Brevibacillus brevis (strain 47 / JCM 6285 / NBRC 100599) protein is Exodeoxyribonuclease 7 large subunit.